A 177-amino-acid chain; its full sequence is Large ribosomal subunit protein uL6 (177 aa).

It belongs to the universal ribosomal protein uL6 family. Part of the 50S ribosomal subunit.

In terms of biological role, this protein binds to the 23S rRNA, and is important in its secondary structure. It is located near the subunit interface in the base of the L7/L12 stalk, and near the tRNA binding site of the peptidyltransferase center. This Stutzerimonas stutzeri (strain A1501) (Pseudomonas stutzeri) protein is Large ribosomal subunit protein uL6.